A 466-amino-acid chain; its full sequence is MNNSTNSSNSGLALTSPYKTFEVVFIVLVAGSLSLVTIIGNILVMVSIKVNRHLQTVNNYFLFSLACADLIIGVFSMNLYTLYTVIGYWPLGPVVCDLWLALDYVVSNASVMNLLIISFDRYFCVTKPLTYPVKRTTKMAGMMIAAAWVLSFILWAPAILFWQFIVGVRTVEDGECYIQFFSNAAVTFGTAIAAFYLPVIIMTVLYWHISRASKSRIKKDKKEPVANQEPVSPSLVQGRIVKPNNNNMPGSDEALEHNKIQNGKAPRDAVTENCVQGEEKESSNDSTSVSAVASNMRDDEITQDENTVSTSLGHSKDENSKQTCIKIVTKTQKSDSCTPANTTVELVGSSGQNGDEKQNIVARKIVKMTKQPAKKKPPPSREKKVTRTILAILLAFIITWAPYNVMVLINTFCAPCIPNTVWTIGYWLCYINSTINPACYALCNATFKKTFKHLLMCHYKNIGATR.

At 1 to 22 (MNNSTNSSNSGLALTSPYKTFE) the chain is on the extracellular side. N-linked (GlcNAc...) asparagine glycans are attached at residues asparagine 2, asparagine 3, and asparagine 6. Residues 23–45 (VVFIVLVAGSLSLVTIIGNILVM) form a helical membrane-spanning segment. Residues 46–59 (VSIKVNRHLQTVNN) are Cytoplasmic-facing. Residues 60 to 80 (YFLFSLACADLIIGVFSMNLY) form a helical membrane-spanning segment. At 81–97 (TLYTVIGYWPLGPVVCD) the chain is on the extracellular side. Cysteine 96 and cysteine 176 are oxidised to a cystine. A helical transmembrane segment spans residues 98–119 (LWLALDYVVSNASVMNLLIISF). An Important for signaling motif is present at residues 120-122 (DRY). Residues 120-139 (DRYFCVTKPLTYPVKRTTKM) lie on the Cytoplasmic side of the membrane. The helical transmembrane segment at 140–162 (AGMMIAAAWVLSFILWAPAILFW) threads the bilayer. The Extracellular portion of the chain corresponds to 163–184 (QFIVGVRTVEDGECYIQFFSNA). The chain crosses the membrane as a helical span at residues 185–209 (AVTFGTAIAAFYLPVIIMTVLYWHI). Topologically, residues 210 to 387 (SRASKSRIKK…PPSREKKVTR (178 aa)) are cytoplasmic. Positions 218-320 (KKDKKEPVAN…SLGHSKDENS (103 aa)) are disordered. The residue at position 232 (serine 232) is a Phosphoserine. Basic and acidic residues predominate over residues 254-270 (ALEHNKIQNGKAPRDAV). Composition is skewed to polar residues over residues 284 to 293 (NDSTSVSAVA) and 304 to 313 (DENTVSTSLG). A helical membrane pass occupies residues 388-410 (TILAILLAFIITWAPYNVMVLIN). At 411–418 (TFCAPCIP) the chain is on the extracellular side. A disulfide bridge connects residues cysteine 413 and cysteine 416. The helical transmembrane segment at 419-442 (NTVWTIGYWLCYINSTINPACYAL) threads the bilayer. Residues 436 to 440 (NPACY) carry the Important for signaling motif. Over 443–466 (CNATFKKTFKHLLMCHYKNIGATR) the chain is Cytoplasmic. Phosphothreonine is present on residues threonine 446, threonine 450, and threonine 465.

The protein belongs to the G-protein coupled receptor 1 family. Muscarinic acetylcholine receptor subfamily. CHRM2 sub-subfamily. As to quaternary structure, interacts with ARRB1 and ARRB2. Interacts with RACK1; the interaction regulates CHRM2 internalization. Phosphorylated in response to agonist treatment.

Its subcellular location is the cell membrane. The protein localises to the postsynaptic cell membrane. Functionally, the muscarinic acetylcholine receptor mediates various cellular responses, including inhibition of adenylate cyclase, breakdown of phosphoinositides and modulation of potassium channels through the action of G proteins. Primary transducing effect is adenylate cyclase inhibition. This is Muscarinic acetylcholine receptor M2 (CHRM2) from Sus scrofa (Pig).